The following is a 128-amino-acid chain: Disintegrin EO4A (128 aa).

An N-terminal signal peptide occupies residues 1–20; sequence MIPVLLVTICLAVFPFQGSS. Residues 21–47 constitute a propeptide that is removed on maturation; that stretch reads IILESGNINDYEIVYPKKVNVLPTGAM. The region spanning 26-112 is the Disintegrin domain; the sequence is GNINDYEIVY…DCPRNPYKGK (87 aa). 4 cysteine pairs are disulfide-bonded: Cys53–Cys76, Cys67–Cys73, Cys72–Cys97, and Cys85–Cys104. Positions 89-91 match the Cell attachment site motif; sequence RGD. Residues 115–128 constitute a propeptide that is removed on maturation; sequence PMKWPAAAKGSVLM.

Belongs to the disintegrin family. Dimeric disintegrin subfamily. In terms of assembly, heterodimer with EO5B; disulfide-linked. Expressed by the venom gland.

Its subcellular location is the secreted. Functionally, poor inhibitor of platelet aggregation. The disintegrin inhibits the adhesion of cells expressing the RGD-dependent integrin alpha-5/beta-1 (ITGA5/ITGB1) to immobilized fibronectin. Inhibition on alpha-2b/beta-3 (ITGA2B/ITGB3) is low. This is Disintegrin EO4A from Echis ocellatus (Ocellated saw-scaled viper).